The following is an 853-amino-acid chain: Translation initiation factor IF-2 (853 aa).

Disordered regions lie at residues 1 to 68 (MSDT…ASDG) and 94 to 265 (LEQR…DKTS). Polar residues predominate over residues 20 to 32 (RKTSGTVKQSFSH). Basic and acidic residues predominate over residues 94–161 (LEQRKAEEAS…ASREAVERPS (68 aa)). The span at 163-176 (APRAAPAAQTPPAA) shows a compositional bias: low complexity. 2 stretches are compositionally biased toward basic and acidic residues: residues 196–219 (PARD…DAER) and 245–265 (RARE…DKTS). The 169-residue stretch at 347–515 (PRAPIVTIMG…AISIQAEILE (169 aa)) folds into the tr-type G domain. Positions 356-363 (GHVDHGKT) are G1. Residue 356–363 (GHVDHGKT) participates in GTP binding. Residues 381-385 (GITQH) form a G2 region. The G3 stretch occupies residues 403–406 (DTPG). GTP is bound by residues 403 to 407 (DTPGH) and 457 to 460 (TKSD). The segment at 457–460 (TKSD) is G4. The segment at 493 to 495 (SAK) is G5.

The protein belongs to the TRAFAC class translation factor GTPase superfamily. Classic translation factor GTPase family. IF-2 subfamily.

The protein localises to the cytoplasm. In terms of biological role, one of the essential components for the initiation of protein synthesis. Protects formylmethionyl-tRNA from spontaneous hydrolysis and promotes its binding to the 30S ribosomal subunits. Also involved in the hydrolysis of GTP during the formation of the 70S ribosomal complex. This chain is Translation initiation factor IF-2, found in Hyphomonas neptunium (strain ATCC 15444).